Reading from the N-terminus, the 94-residue chain is Exodeoxyribonuclease 7 small subunit (94 aa).

The interval 1-21 (MPRAPNDAPSASATPSATPAS) is disordered.

The protein belongs to the XseB family. In terms of assembly, heterooligomer composed of large and small subunits.

It localises to the cytoplasm. The catalysed reaction is Exonucleolytic cleavage in either 5'- to 3'- or 3'- to 5'-direction to yield nucleoside 5'-phosphates.. Bidirectionally degrades single-stranded DNA into large acid-insoluble oligonucleotides, which are then degraded further into small acid-soluble oligonucleotides. This Ralstonia pickettii (strain 12J) protein is Exodeoxyribonuclease 7 small subunit.